The primary structure comprises 263 residues: uncharacterized protein (263 aa).

Gly-17–Ser-41 contacts NAD(+). Substrate is bound at residue Ser-147. The Proton acceptor role is filled by Tyr-160. NAD(+) is bound at residue Lys-164.

The protein belongs to the short-chain dehydrogenases/reductases (SDR) family.

This is an uncharacterized protein from Mycobacterium tuberculosis (strain CDC 1551 / Oshkosh).